The chain runs to 424 residues: Calreticulin (424 aa).

The N-terminal stretch at 1–29 is a signal peptide; that stretch reads MAIRARSSSYAAAAVALALALASVAAVAG. A glycan (N-linked (GlcNAc...) asparagine) is linked at Asn-61. A disulfide bridge connects residues Cys-115 and Cys-147. Positions 119, 121, 138, and 145 each coordinate an alpha-D-glucoside. Tandem repeats lie at residues 201–212, 220–231, 237–248, 255–266, 270–280, 284–294, and 298–308. Positions 201–266 are 4 X approximate repeats; it reads KQSGSIYEHW…DAKKPEDWDD (66 aa). Residues 217–262 show a composition bias toward basic and acidic residues; the sequence is QIKDPEAKKPEDWDDKEYIPDPEDKKPEGYDDIPKEIPDPDAKKPE. Residues 217–289 form a disordered region; the sequence is QIKDPEAKKP…PEYKGPWKQK (73 aa). Residues 270 to 308 are 3 X approximate repeats; sequence GEWTAPTIPNPEYKGPWKQKKIKNPNYQGKWKAPMIDNP. Glu-328 is a binding site for an alpha-D-glucoside. Basic and acidic residues predominate over residues 356–385; that stretch reads ETWGKHKDAEKAAFDEAEKKKEEEEAAKAG. Residues 356–424 are disordered; that stretch reads ETWGKHKDAE…DSDDEKHDEL (69 aa). Residues 386 to 401 are compositionally biased toward acidic residues; sequence EDDDDLDDEDAEDEDK. Over residues 402-424 the composition is skewed to basic and acidic residues; the sequence is ADEKADSDAEDGKDSDDEKHDEL. The Prevents secretion from ER motif lies at 421-424; the sequence is HDEL.

This sequence belongs to the calreticulin family. Post-translationally, phosphorylated.

Its subcellular location is the endoplasmic reticulum lumen. In terms of biological role, molecular calcium-binding chaperone promoting folding, oligomeric assembly and quality control in the ER via the calreticulin/calnexin cycle. This lectin may interact transiently with almost all of the monoglucosylated glycoproteins that are synthesized in the ER. In Oryza sativa subsp. japonica (Rice), this protein is Calreticulin.